Here is a 160-residue protein sequence, read N- to C-terminus: Transcription antitermination protein NusB (160 aa).

Belongs to the NusB family.

In terms of biological role, involved in transcription antitermination. Required for transcription of ribosomal RNA (rRNA) genes. Binds specifically to the boxA antiterminator sequence of the ribosomal RNA (rrn) operons. This chain is Transcription antitermination protein NusB, found in Chlamydia pneumoniae (Chlamydophila pneumoniae).